A 227-amino-acid polypeptide reads, in one-letter code: Acyl-protein thioesterase 1 (227 aa).

Residues S119, D173, and H207 each act as charge relay system in the active site.

The protein belongs to the AB hydrolase superfamily. AB hydrolase 2 family.

The protein localises to the cytoplasm. It localises to the nucleus. The catalysed reaction is S-hexadecanoyl-L-cysteinyl-[protein] + H2O = L-cysteinyl-[protein] + hexadecanoate + H(+). Its function is as follows. Hydrolyzes fatty acids from S-acylated cysteine residues in proteins with a strong preference for palmitoylated G-alpha proteins over other acyl substrates. Mediates the deacylation of G-alpha proteins such as GPA1 in vivo, but has weak or no activity toward palmitoylated Ras proteins. Has weak lysophospholipase activity in vitro; however such activity may not exist in vivo. The polypeptide is Acyl-protein thioesterase 1 (Saccharomyces cerevisiae (strain ATCC 204508 / S288c) (Baker's yeast)).